Here is a 33-residue protein sequence, read N- to C-terminus: Photosystem II reaction center protein Psb30 (33 aa).

Residues 5 to 25 (VVVQLGSLSLIVLAGPIIVLL) form a helical membrane-spanning segment.

The protein belongs to the Psb30/Ycf12 family. As to quaternary structure, PSII is composed of 1 copy each of membrane proteins PsbA, PsbB, PsbC, PsbD, PsbE, PsbF, PsbH, PsbI, PsbJ, PsbK, PsbL, PsbM, PsbT, PsbX, PsbY, PsbZ, Psb30/Ycf12, peripheral proteins of the oxygen-evolving complex and a large number of cofactors. It forms dimeric complexes.

The protein resides in the plastid. It is found in the chloroplast thylakoid membrane. A core subunit of photosystem II (PSII), probably helps stabilize the reaction center. The polypeptide is Photosystem II reaction center protein Psb30 (Mesostigma viride (Green alga)).